Here is a 1358-residue protein sequence, read N- to C-terminus: Phosphoinositide 3-kinase regulatory subunit 4 (1358 aa).

A lipid anchor (N-myristoyl glycine) is attached at Gly-2. The region spanning 26-324 (FEYDKSLGST…AFPEIFYTFL (299 aa)) is the Protein kinase domain. ATP is bound by residues 32-40 (LGSTRFFKV) and Lys-53. Asp-148 serves as the catalytic Proton acceptor. HEAT repeat units lie at residues 413 to 450 (ILLDRITPYLLHFSNDSVPRVRAEALRTLTKVLALVKE), 458 to 495 (IYPEYILPGIAHLAQDDATIVRLAYAENIALLAETALR), and 572 to 610 (KANDVLLSHMITFLNDKNDWHLRGAFFDSIVGVAAYVGW). Ser-808, Ser-813, Ser-853, and Ser-865 each carry phosphoserine. The disordered stretch occupies residues 875–898 (LPKGSDQEVIQTGKPPRSESSAGI). WD repeat units follow at residues 991-1030 (EHKSAVNRIRVSDEHSLFATCSNDGTVKIWNSQKMEGKTT), 1040-1079 (RIGGRVKTLTFCQGSHYLAIASDNGAVQLLGIEASKLPKS), 1093-1134 (KEDG…NAWT), 1139-1178 (LKSGLITSFAVDIHQCWLCIGTSSGTMACWDMRFQLPISS), 1182-1223 (PSRA…RRFT), and 1237-1278 (PSPH…RSYV). Residues 1307–1326 (KQKVGPSDDTPRRGPESLPV) form a disordered region. Residues 1315 to 1326 (DTPRRGPESLPV) are compositionally biased toward basic and acidic residues. Position 1316 is a phosphothreonine (Thr-1316). Residues 1327–1358 (GHHDIITDVATFQTTQGFIVTASRDGIVKVWK) form a WD 7 repeat.

This sequence belongs to the protein kinase superfamily. Ser/Thr protein kinase family. As to quaternary structure, component of the PI3K (PI3KC3/PI3K-III/class III phosphatidylinositol 3-kinase) complex the core of which is composed of the catalytic subunit PIK3C3, the regulatory subunit PIK3R4 and BECN1 associating with additional regulatory/auxiliary subunits to form alternative complex forms. Alternative complex forms containing a fourth regulatory subunit in a mutually exclusive manner are PI3K complex I (PI3KC3-C1) containing ATG14, and PI3K complex II (PI3KC3-C2) containing UVRAG. PI3KC3-C1 displays a V-shaped architecture with PIK3R4 serving as a bridge between PIK3C3 and the ATG14:BECN1 subcomplex. Both, PI3KC3-C1 and PI3KC3-C2, can associate with further regulatory subunits, such as RUBCN, SH3GLB1/Bif-1, AMBRA1 and NRBF2. PI3KC3-C1 probably associates with PIK3CB. Interacts with RAB7A in the presence of PIK3C3/VPS34. Interacts with NRBF2. Interacts with ARMC3. Mn(2+) is required as a cofactor. In terms of processing, myristoylated. Post-translationally, probably autophosphorylated. As to expression, ubiquitously expressed.

The protein resides in the late endosome. It is found in the cytoplasmic vesicle. Its subcellular location is the autophagosome. It localises to the membrane. It carries out the reaction L-seryl-[protein] + ATP = O-phospho-L-seryl-[protein] + ADP + H(+). The catalysed reaction is L-threonyl-[protein] + ATP = O-phospho-L-threonyl-[protein] + ADP + H(+). Its function is as follows. Regulatory subunit of the PI3K complex that mediates formation of phosphatidylinositol 3-phosphate; different complex forms are believed to play a role in multiple membrane trafficking pathways: PI3KC3-C1 is involved in initiation of autophagosomes and PI3KC3-C2 in maturation of autophagosomes and endocytosis. Involved in regulation of degradative endocytic trafficking and cytokinesis, probably in the context of PI3KC3-C2. This is Phosphoinositide 3-kinase regulatory subunit 4 (PIK3R4) from Homo sapiens (Human).